We begin with the raw amino-acid sequence, 236 residues long: Ubiquinone biosynthesis O-methyltransferase (236 aa).

S-adenosyl-L-methionine contacts are provided by R39, G59, D80, and M124.

This sequence belongs to the methyltransferase superfamily. UbiG/COQ3 family.

It catalyses the reaction a 3-demethylubiquinol + S-adenosyl-L-methionine = a ubiquinol + S-adenosyl-L-homocysteine + H(+). The catalysed reaction is a 3-(all-trans-polyprenyl)benzene-1,2-diol + S-adenosyl-L-methionine = a 2-methoxy-6-(all-trans-polyprenyl)phenol + S-adenosyl-L-homocysteine + H(+). It participates in cofactor biosynthesis; ubiquinone biosynthesis. In terms of biological role, O-methyltransferase that catalyzes the 2 O-methylation steps in the ubiquinone biosynthetic pathway. The polypeptide is Ubiquinone biosynthesis O-methyltransferase (Shewanella halifaxensis (strain HAW-EB4)).